Consider the following 202-residue polypeptide: Glycerol-3-phosphate acyltransferase (202 aa).

4 helical membrane passes run 2 to 22 (ANLL…AVVV), 82 to 102 (DTGL…PVFH), 119 to 139 (AIDP…AFFF), and 158 to 178 (VLMN…VLLI).

It belongs to the PlsY family. As to quaternary structure, probably interacts with PlsX.

It localises to the cell inner membrane. The enzyme catalyses an acyl phosphate + sn-glycerol 3-phosphate = a 1-acyl-sn-glycero-3-phosphate + phosphate. It participates in lipid metabolism; phospholipid metabolism. Catalyzes the transfer of an acyl group from acyl-phosphate (acyl-PO(4)) to glycerol-3-phosphate (G3P) to form lysophosphatidic acid (LPA). This enzyme utilizes acyl-phosphate as fatty acyl donor, but not acyl-CoA or acyl-ACP. This is Glycerol-3-phosphate acyltransferase from Cupriavidus taiwanensis (strain DSM 17343 / BCRC 17206 / CCUG 44338 / CIP 107171 / LMG 19424 / R1) (Ralstonia taiwanensis (strain LMG 19424)).